A 349-amino-acid polypeptide reads, in one-letter code: Protein RecA (349 aa).

71 to 75 contributes to the phosphate binding site; sequence SSGKT. ATP is bound by residues 71–76 and 102–105; these read SSGKTT and DPEY. Q196 provides a ligand contact to phosphate.

The protein belongs to the RecA family. Polymerizes non-specifically on ssDNA to form filaments. Interacts with and activates LexA leading to autocatalytic cleavage of LexA, which derepresses the SOS regulon and activates DNA repair.

The protein resides in the cytoplasm. In terms of biological role, required for homologous recombination (HR) and the bypass of mutagenic DNA lesions (double strand breaks, DSB) by the SOS response. Can catalyze the hydrolysis of ATP in the presence of single-stranded DNA, the ATP-dependent uptake of single-stranded DNA by duplex DNA, and the ATP-dependent hybridization of homologous single-stranded DNAs. Numerous X-ray crystals have been resolved under different conditions which indicate the flexibility of the protein, essential to its function. Gln-196 contributes to this plasticity by acting as a switch residue, which transmits the effect of nucleotide binding to the DNA-binding region. The sequence is that of Protein RecA from Mycolicibacterium smegmatis (strain ATCC 700084 / mc(2)155) (Mycobacterium smegmatis).